The primary structure comprises 1169 residues: MVTLEKIELKNFKSFKKLSLDIPKGFTAIVGPNGSGKSNIVDAILFVLGKTSAKKLRANRFSGLITYHNGKRADFAEVCLYFTNENNAFNVNADKVGILRRIKSSGETDYYLVWKENDKEKRKKMTKHEIIDLFRRLGLLGDNVISQGDLLKIINISPIERRKIIDEISGIAEFDEKKKKAEEELKKARELIEMIDIRISEVENNLKKLKKEKEDAEKYIKLNEELKAAKYALILKKVSYLNVLLENIQNDIKNLEELKNEFLSKVREIDVEIENLKLRLNNIINELNEKGNEEVLELHKSIKELEVEIENDKKVLDSSINELKKVEVEIENKKKEIKETQKKIIENRDSIIEKEQQIKEIEEKIKNLNYEKERLKEAIAESESIIKHLKESEMEIADEIAKNQNELYRLKKELNDLDNLINRKNFEIEKNNEMIKKLKEELETVEDVDTKPLYLELENLNVEIEFSKRGIKELEEKKKELQAKLDELHAEYVKENARIKALKEMEELSMDRAIREILNANLPGIIDIVGNLGKTKIEYKTAIEVAAGNRLNHIVVKRMDDAVRAIKYLKERKLGRATFLPLDRIEGREAYYIDEDGVIGRAIDLVEFDEKYRRVFEYVFGNTVVVENIDIAKELAKKYRKVRFVTLDGDVIEPSGAMIGGTFKSKAKIKVDVDLSKLNKIADEIIAIESELRKIKEEIERLSKIVKRSSAKKMEIENTLEIIKKNEMRKREIAEKNTIKIKELELKNKDILEELEELNLKREEILNRINEIESKINELIERREKIINELKEYESDENLKRMNEIEGELKILEKEKAKLKNEIDKGLTLVKEILIPKIEELNKKVSELINKKVILEKNISFYKESIEKNLSILEEKRKRYEELAKNLKELTEKKEQLEKEIETLERERREILRKVRDIENRINELMVEKAKYESKLEEEERKLYLCEKVDVSKELEKKDIEELEIYIGELENEIKSLEPVNMRAIEDYNYVAERYKELIEKRKEYERDEKKYLQLMEELENKKKEVFMEVFNKVAKNFEEVYKEIGGIGKLSLENEKNPFEGGILIDASPRGKKLLSLDAMSGGEKSLTALAFLFAIQRLNPSPFYVLDEVDAALDVKNVSLIADMIKNASKDSQFIVISHREQMVSKADVVYGVYMENGLSKVVGIRL.

Position 32-39 (32-39) interacts with ATP; that stretch reads PNGSGKSN. Residues 166–507 adopt a coiled-coil conformation; it reads DEISGIAEFD…RIKALKEMEE (342 aa). Positions 523–636 constitute an SMC hinge domain; sequence PGIIDIVGNL…ENIDIAKELA (114 aa). Positions 676 to 1030 form a coiled coil; sequence SKLNKIADEI…NKKKEVFMEV (355 aa).

The protein belongs to the SMC family. In terms of assembly, homodimer.

It is found in the cytoplasm. Its function is as follows. Required for chromosome condensation and partitioning. The chain is Chromosome partition protein Smc from Methanocaldococcus jannaschii (strain ATCC 43067 / DSM 2661 / JAL-1 / JCM 10045 / NBRC 100440) (Methanococcus jannaschii).